A 231-amino-acid chain; its full sequence is Putative cobalt transport protein CbiM 1 (231 aa).

The next 6 helical transmembrane spans lie at 9–29 (PGPW…YGIF), 41–61 (VLPL…LKLP), 74–94 (GMAV…IVLL), 107–127 (TFGA…YAIY), 135–155 (VNFY…TYVV), and 181–201 (VFAI…TLLF).

Belongs to the CbiM family. As to quaternary structure, forms an energy-coupling factor (ECF) transporter complex composed of an ATP-binding protein (A component, CbiO), a transmembrane protein (T component, CbiQ) and 2 possible substrate-capture proteins (S components, CbiM and CbiN) of unknown stoichimetry.

It localises to the cell membrane. Its pathway is cofactor biosynthesis; adenosylcobalamin biosynthesis. In terms of biological role, part of the energy-coupling factor (ECF) transporter complex CbiMNOQ involved in cobalt import. The polypeptide is Putative cobalt transport protein CbiM 1 (Methanosarcina barkeri (strain Fusaro / DSM 804)).